Reading from the N-terminus, the 424-residue chain is Tyrosine--tRNA ligase (424 aa).

Residue Tyr-37 participates in L-tyrosine binding. A 'HIGH' region motif is present at residues 42-51; it reads PTADSLHLGH. An N6-acetyllysine modification is found at Lys-144. Residues Tyr-175 and Gln-179 each coordinate L-tyrosine. The short motif at 235–239 is the 'KMSKS' region element; sequence KFGKT. Lys-238 serves as a coordination point for ATP. One can recognise an S4 RNA-binding domain in the interval 357 to 414; sequence ADLMQALVDSELQPSRGQARKTIASNAITINGEKQSDPEYFFKEEDRLFGRFTLLRRG.

Belongs to the class-I aminoacyl-tRNA synthetase family. TyrS type 1 subfamily. Homodimer.

It is found in the cytoplasm. It catalyses the reaction tRNA(Tyr) + L-tyrosine + ATP = L-tyrosyl-tRNA(Tyr) + AMP + diphosphate + H(+). Functionally, catalyzes the attachment of tyrosine to tRNA(Tyr) in a two-step reaction: tyrosine is first activated by ATP to form Tyr-AMP and then transferred to the acceptor end of tRNA(Tyr). This Shigella flexneri serotype 5b (strain 8401) protein is Tyrosine--tRNA ligase.